We begin with the raw amino-acid sequence, 869 residues long: Probable inorganic carbon transporter subunit DabA (869 aa).

Positions 1–32 (MSTATLEQRAKRGEAPRANDAGHCAHPADGAR) are disordered. Residues 8–17 (QRAKRGEAPR) are compositionally biased toward basic and acidic residues. Residues Cys376, Asp378, His555, and Cys570 each contribute to the Zn(2+) site.

Belongs to the inorganic carbon transporter (TC 9.A.2) DabA family. In terms of assembly, forms a complex with DabB. It depends on Zn(2+) as a cofactor.

The protein resides in the cell inner membrane. In terms of biological role, part of an energy-coupled inorganic carbon pump. The sequence is that of Probable inorganic carbon transporter subunit DabA from Burkholderia multivorans (strain ATCC 17616 / 249).